A 608-amino-acid chain; its full sequence is Ceramide kinase (608 aa).

In terms of domain architecture, DAGKc spans 160-367 (ERPRNLLVFV…LDAMQVVRWK (208 aa)). Residues 170–174 (HPKSG), threonine 201, and 230–236 (GDGFFNE) contribute to the ATP site. Substrate is bound at residue 229–232 (GGDG). Residue aspartate 231 is the Proton donor/acceptor of the active site. The interval 254–280 (PSDSFNSVQSRGSSSVPEPGDEVHETD) is disordered. The segment covering 255–269 (SDSFNSVQSRGSSSV) has biased composition (polar residues). Serine 329 lines the ATP pocket.

Requires Ca(2+) as cofactor.

The enzyme catalyses an N-acylsphing-4-enine + ATP = an N-acylsphing-4-enine 1-phosphate + ADP + H(+). In terms of biological role, catalyzes specifically the phosphorylation of ceramide to form ceramide 1-phosphate. Possesses high activity on ceramide analogs (C6, C8 synthetic ceramides) and lower activity on C6 and C8 dihydroceramides. Has weak activity on natural ceramides (a mixture of ceramides from bovine brain) and the synthetic substrate C2 ceramide. Has very poor activity on diacylglycerol and sphingosine. Ceramide is a critical sphingolipid metabolite that induces programmed cell death (PCD) in plants and ceramide-1-phosphate has a PCD suppressive effect. Thus, ceramide phosphorylation plays a role in the modulation of PCD and CERK activity is crucial for the maintenance of cell viability. The protein is Ceramide kinase (CERK) of Arabidopsis thaliana (Mouse-ear cress).